Consider the following 576-residue polypeptide: Sulfite reductase [NADPH] hemoprotein beta-component (576 aa).

Positions 439, 445, 485, and 489 each coordinate [4Fe-4S] cluster. A siroheme-binding site is contributed by Cys-489.

It belongs to the nitrite and sulfite reductase 4Fe-4S domain family. As to quaternary structure, alpha(8)-beta(8). The alpha component is a flavoprotein, the beta component is a hemoprotein. Siroheme is required as a cofactor. Requires [4Fe-4S] cluster as cofactor.

It catalyses the reaction hydrogen sulfide + 3 NADP(+) + 3 H2O = sulfite + 3 NADPH + 4 H(+). It participates in sulfur metabolism; hydrogen sulfide biosynthesis; hydrogen sulfide from sulfite (NADPH route): step 1/1. Its function is as follows. Component of the sulfite reductase complex that catalyzes the 6-electron reduction of sulfite to sulfide. This is one of several activities required for the biosynthesis of L-cysteine from sulfate. This chain is Sulfite reductase [NADPH] hemoprotein beta-component, found in Aliivibrio fischeri (strain ATCC 700601 / ES114) (Vibrio fischeri).